The primary structure comprises 97 residues: MSKITADDVRKVAKLARLDLPEDTIATYTGQLERILDYVDQLQAVDTEGVPPTTRAVEVVNATREDSVVATDVRQELLDQAPQREGDFFRVPKILAD.

This sequence belongs to the GatC family. In terms of assembly, heterotrimer of A, B and C subunits.

It catalyses the reaction L-glutamyl-tRNA(Gln) + L-glutamine + ATP + H2O = L-glutaminyl-tRNA(Gln) + L-glutamate + ADP + phosphate + H(+). The catalysed reaction is L-aspartyl-tRNA(Asn) + L-glutamine + ATP + H2O = L-asparaginyl-tRNA(Asn) + L-glutamate + ADP + phosphate + 2 H(+). In terms of biological role, allows the formation of correctly charged Asn-tRNA(Asn) or Gln-tRNA(Gln) through the transamidation of misacylated Asp-tRNA(Asn) or Glu-tRNA(Gln) in organisms which lack either or both of asparaginyl-tRNA or glutaminyl-tRNA synthetases. The reaction takes place in the presence of glutamine and ATP through an activated phospho-Asp-tRNA(Asn) or phospho-Glu-tRNA(Gln). This chain is Aspartyl/glutamyl-tRNA(Asn/Gln) amidotransferase subunit C, found in Synechococcus sp. (strain CC9311).